We begin with the raw amino-acid sequence, 309 residues long: tRNA uridine(34) hydroxylase (309 aa).

Residues 123–217 (DDPEVIVVDT…YLEEVPEEQT (95 aa)) form the Rhodanese domain. Cysteine 177 functions as the Cysteine persulfide intermediate in the catalytic mechanism.

The protein belongs to the TrhO family.

It carries out the reaction uridine(34) in tRNA + AH2 + O2 = 5-hydroxyuridine(34) in tRNA + A + H2O. Functionally, catalyzes oxygen-dependent 5-hydroxyuridine (ho5U) modification at position 34 in tRNAs. The sequence is that of tRNA uridine(34) hydroxylase from Saccharophagus degradans (strain 2-40 / ATCC 43961 / DSM 17024).